A 368-amino-acid polypeptide reads, in one-letter code: 2-deoxy-scyllo-inosose synthase (368 aa).

NAD(+) contacts are provided by residues D42, 72–75 (EEYK), 104–108 (GLTGN), 128–129 (TT), 139–141 (SIK), 150–151 (KN), and Q176. K141 is an active-site residue. E183 contacts Co(2+). Residue E243 is part of the active site. Residues H246 and H262 each coordinate Co(2+).

This sequence belongs to the sugar phosphate cyclases superfamily. DOI synthase family. As to quaternary structure, was isolated as a heterodimeric enzyme comprising of BtrC and a smaller polypeptide further identified as PdxT by sequence homology. Homodimer in solution. The cofactor is NAD(+). It depends on Co(2+) as a cofactor.

It carries out the reaction D-glucose 6-phosphate = 2-deoxy-L-scyllo-inosose + phosphate. It participates in metabolic intermediate biosynthesis; 2-deoxystreptamine biosynthesis; 2-deoxystreptamine from D-glucose 6-phosphate: step 1/4. It functions in the pathway antibiotic biosynthesis; butirosin biosynthesis. With respect to regulation, strongly inhibited by EDTA, zinc and Cu(2+). Its function is as follows. Catalyzes the intramolecular carbocycle formation from D-glucose-6-phosphate to 2-deoxy-scyllo-inosose (DOI). This is 2-deoxy-scyllo-inosose synthase (btrC) from Niallia circulans (Bacillus circulans).